The chain runs to 491 residues: Acetyl-coenzyme A carboxylase carboxyl transferase subunit beta, chloroplastic (491 aa).

The tract at residues 26 to 49 (ARPRPIGNTNGSQDPSINDRDKNG) is disordered. Over residues 32 to 41 (GNTNGSQDPS) the composition is skewed to polar residues. One can recognise a CoA carboxyltransferase N-terminal domain in the interval 222 to 491 (LWVQCDNCYG…PLNHNSQVKR (270 aa)). 4 residues coordinate Zn(2+): C226, C229, C245, and C248. The segment at 226-248 (CDNCYGLNYKKIFSSKMNICEQC) adopts a C4-type zinc-finger fold.

It belongs to the AccD/PCCB family. In terms of assembly, acetyl-CoA carboxylase is a heterohexamer composed of biotin carboxyl carrier protein, biotin carboxylase and 2 subunits each of ACCase subunit alpha and ACCase plastid-coded subunit beta (accD). The cofactor is Zn(2+).

The protein resides in the plastid. It is found in the chloroplast stroma. It carries out the reaction N(6)-carboxybiotinyl-L-lysyl-[protein] + acetyl-CoA = N(6)-biotinyl-L-lysyl-[protein] + malonyl-CoA. It functions in the pathway lipid metabolism; malonyl-CoA biosynthesis; malonyl-CoA from acetyl-CoA: step 1/1. Component of the acetyl coenzyme A carboxylase (ACC) complex. Biotin carboxylase (BC) catalyzes the carboxylation of biotin on its carrier protein (BCCP) and then the CO(2) group is transferred by the transcarboxylase to acetyl-CoA to form malonyl-CoA. The sequence is that of Acetyl-coenzyme A carboxylase carboxyl transferase subunit beta, chloroplastic from Ceratophyllum demersum (Rigid hornwort).